The primary structure comprises 246 residues: Pyridoxine 5'-phosphate synthase (246 aa).

2 residues coordinate 3-amino-2-oxopropyl phosphate: Asn-8 and Arg-19. His-44 serves as the catalytic Proton acceptor. Positions 46 and 51 each coordinate 1-deoxy-D-xylulose 5-phosphate. The active-site Proton acceptor is Glu-76. A 1-deoxy-D-xylulose 5-phosphate-binding site is contributed by Thr-106. Catalysis depends on His-198, which acts as the Proton donor. Residues Asp-199 and 221-222 contribute to the 3-amino-2-oxopropyl phosphate site; that span reads GH.

This sequence belongs to the PNP synthase family. As to quaternary structure, homooctamer; tetramer of dimers.

It is found in the cytoplasm. It catalyses the reaction 3-amino-2-oxopropyl phosphate + 1-deoxy-D-xylulose 5-phosphate = pyridoxine 5'-phosphate + phosphate + 2 H2O + H(+). It participates in cofactor biosynthesis; pyridoxine 5'-phosphate biosynthesis; pyridoxine 5'-phosphate from D-erythrose 4-phosphate: step 5/5. Its function is as follows. Catalyzes the complicated ring closure reaction between the two acyclic compounds 1-deoxy-D-xylulose-5-phosphate (DXP) and 3-amino-2-oxopropyl phosphate (1-amino-acetone-3-phosphate or AAP) to form pyridoxine 5'-phosphate (PNP) and inorganic phosphate. The protein is Pyridoxine 5'-phosphate synthase of Mesorhizobium japonicum (strain LMG 29417 / CECT 9101 / MAFF 303099) (Mesorhizobium loti (strain MAFF 303099)).